The sequence spans 160 residues: Non-secretory ribonuclease (160 aa).

An N-terminal signal peptide occupies residues 1-27; that stretch reads MVPKLFTSQICLLLLLGLMGVEGSLHA. Residue tryptophan 34 is glycosylated (C-linked (Man) tryptophan). Catalysis depends on histidine 42, which acts as the Proton acceptor. Asparagine 44 is a glycosylation site (N-linked (GlcNAc...) asparagine). 4 disulfide bridges follow: cysteine 50–cysteine 110, cysteine 64–cysteine 122, cysteine 82–cysteine 137, and cysteine 89–cysteine 98. Tyrosine 60 carries the 3'-nitrotyrosine modification. 65–69 provides a ligand contact to substrate; it reads KNQNT. N-linked (GlcNAc...) asparagine glycosylation is found at asparagine 92, asparagine 111, and asparagine 138. Histidine 155 serves as the catalytic Proton donor.

Belongs to the pancreatic ribonuclease family. Interacts with and forms a tight 1:1 complex with RNH1. Dimerization of two such complexes may occur.

The protein localises to the lysosome. Its subcellular location is the cytoplasmic granule. It carries out the reaction an [RNA] containing cytidine + H2O = an [RNA]-3'-cytidine-3'-phosphate + a 5'-hydroxy-ribonucleotide-3'-[RNA].. It catalyses the reaction an [RNA] containing uridine + H2O = an [RNA]-3'-uridine-3'-phosphate + a 5'-hydroxy-ribonucleotide-3'-[RNA].. Functionally, this is a non-secretory ribonuclease. It is a pyrimidine specific nuclease with a slight preference for U. Cytotoxin and helminthotoxin. Possesses a wide variety of biological activities. This Macaca fascicularis (Crab-eating macaque) protein is Non-secretory ribonuclease (RNASE2).